The primary structure comprises 975 residues: Glycine dehydrogenase (decarboxylating) (975 aa).

Lys-723 is subject to N6-(pyridoxal phosphate)lysine.

This sequence belongs to the GcvP family. The glycine cleavage system is composed of four proteins: P, T, L and H. Requires pyridoxal 5'-phosphate as cofactor.

The catalysed reaction is N(6)-[(R)-lipoyl]-L-lysyl-[glycine-cleavage complex H protein] + glycine + H(+) = N(6)-[(R)-S(8)-aminomethyldihydrolipoyl]-L-lysyl-[glycine-cleavage complex H protein] + CO2. In terms of biological role, the glycine cleavage system catalyzes the degradation of glycine. The P protein binds the alpha-amino group of glycine through its pyridoxal phosphate cofactor; CO(2) is released and the remaining methylamine moiety is then transferred to the lipoamide cofactor of the H protein. This chain is Glycine dehydrogenase (decarboxylating), found in Burkholderia cenocepacia (strain HI2424).